The primary structure comprises 161 residues: MKYDTSELCDIYQEDVNVVEPLFSNFGGRASFGGQIITVKCFEDNGLLYDLLEQNGRGRVLVVDGGGSVRRALVDAELARLAVQNEWEGLVIYGAVRQVDDLEELDIGIQAMAAIPVGAAGESIGESDVRVNFGGVTFFSGDHLYADNTGIILSEDPLDIE.

This sequence belongs to the RraA family. As to quaternary structure, homotrimer. Binds to both RNA-binding sites in the C-terminal region of Rne and to RhlB.

It localises to the cytoplasm. Its function is as follows. Globally modulates RNA abundance by binding to RNase E (Rne) and regulating its endonucleolytic activity. Can modulate Rne action in a substrate-dependent manner by altering the composition of the degradosome. Modulates RNA-binding and helicase activities of the degradosome. The polypeptide is Regulator of ribonuclease activity A (Shigella flexneri serotype 5b (strain 8401)).